We begin with the raw amino-acid sequence, 332 residues long: Ketol-acid reductoisomerase (NADP(+)) (332 aa).

Residues 5–185 form the KARI N-terminal Rossmann domain; the sequence is VKVYYDDEVS…GCTRAGVIET (181 aa). NADP(+) contacts are provided by residues 28 to 31, R51, S56, and 86 to 89; these read YGNQ and DLVQ. H111 is an active-site residue. NADP(+) is bound at residue G137. A KARI C-terminal knotted domain is found at 186 to 331; it reads TFKDETESDL…RFIRKMSGLE (146 aa). Mg(2+) is bound by residues D194, E198, E230, and E234. Position 255 (S255) interacts with substrate.

Belongs to the ketol-acid reductoisomerase family. It depends on Mg(2+) as a cofactor.

The catalysed reaction is (2R)-2,3-dihydroxy-3-methylbutanoate + NADP(+) = (2S)-2-acetolactate + NADPH + H(+). It catalyses the reaction (2R,3R)-2,3-dihydroxy-3-methylpentanoate + NADP(+) = (S)-2-ethyl-2-hydroxy-3-oxobutanoate + NADPH + H(+). The protein operates within amino-acid biosynthesis; L-isoleucine biosynthesis; L-isoleucine from 2-oxobutanoate: step 2/4. It functions in the pathway amino-acid biosynthesis; L-valine biosynthesis; L-valine from pyruvate: step 2/4. Functionally, involved in the biosynthesis of branched-chain amino acids (BCAA). Catalyzes an alkyl-migration followed by a ketol-acid reduction of (S)-2-acetolactate (S2AL) to yield (R)-2,3-dihydroxy-isovalerate. In the isomerase reaction, S2AL is rearranged via a Mg-dependent methyl migration to produce 3-hydroxy-3-methyl-2-ketobutyrate (HMKB). In the reductase reaction, this 2-ketoacid undergoes a metal-dependent reduction by NADPH to yield (R)-2,3-dihydroxy-isovalerate. In Pyrococcus abyssi (strain GE5 / Orsay), this protein is Ketol-acid reductoisomerase (NADP(+)).